The chain runs to 362 residues: 3-dehydroquinate synthase (362 aa).

NAD(+)-binding positions include 71–76 (DGEQYK), 105–109 (GVIGD), 129–130 (TT), K142, K151, and 169–172 (CLKT). Zn(2+)-binding residues include E184, H247, and H264.

Belongs to the sugar phosphate cyclases superfamily. Dehydroquinate synthase family. Co(2+) serves as cofactor. It depends on Zn(2+) as a cofactor. The cofactor is NAD(+).

The protein localises to the cytoplasm. It carries out the reaction 7-phospho-2-dehydro-3-deoxy-D-arabino-heptonate = 3-dehydroquinate + phosphate. The protein operates within metabolic intermediate biosynthesis; chorismate biosynthesis; chorismate from D-erythrose 4-phosphate and phosphoenolpyruvate: step 2/7. Its function is as follows. Catalyzes the conversion of 3-deoxy-D-arabino-heptulosonate 7-phosphate (DAHP) to dehydroquinate (DHQ). The sequence is that of 3-dehydroquinate synthase from Salmonella enteritidis PT4 (strain P125109).